Reading from the N-terminus, the 447-residue chain is Na(+)/H(+) antiporter NhaA 2 (447 aa).

10 helical membrane passes run 34 to 54 (VGGV…NSPW), 77 to 97 (LTLG…VVGL), 115 to 135 (ALPI…FVLV), 146 to 166 (GWAI…AVIG), 176 to 196 (FLLT…AVFY), 200 to 220 (INGL…LCVQ), 290 to 310 (VSAG…SIGG), 321 to 341 (PITL…IVLT), 359 to 379 (WVDV…SLLI), and 393 to 413 (FVKI…AVVL).

It belongs to the NhaA Na(+)/H(+) (TC 2.A.33) antiporter family.

The protein resides in the cell membrane. It carries out the reaction Na(+)(in) + 2 H(+)(out) = Na(+)(out) + 2 H(+)(in). Its function is as follows. Na(+)/H(+) antiporter that extrudes sodium in exchange for external protons. This chain is Na(+)/H(+) antiporter NhaA 2, found in Mycolicibacterium gilvum (strain PYR-GCK) (Mycobacterium gilvum (strain PYR-GCK)).